The sequence spans 364 residues: O-methyltransferase ZRP4 (364 aa).

Residues G208, D231, D251, M252, and K265 each coordinate S-adenosyl-L-methionine. The active-site Proton acceptor is the H269.

It belongs to the class I-like SAM-binding methyltransferase superfamily. Cation-independent O-methyltransferase family. COMT subfamily. Homodimer. As to expression, accumulates preferentially in the roots and is located predominantly in the region of the endodermis, low levels are seen in the leaves, stems and other shoot organs.

Functionally, may be involved in the O-methylation of suberin phenylpropanoid precursors. The protein is O-methyltransferase ZRP4 (ZRP4) of Zea mays (Maize).